Reading from the N-terminus, the 251-residue chain is Ubiquitin-conjugating enzyme E2 6 (251 aa).

The Cytoplasmic portion of the chain corresponds to Met1–Ser229. The UBC core domain occupies Gln5–Phe154. The Glycyl thioester intermediate role is filled by Cys87. A compositionally biased stretch (basic and acidic residues) spans Ala173–Ala185. A disordered region spans residues Ala173–Ser200. A helical transmembrane segment spans residues Asn230–Met250.

It belongs to the ubiquitin-conjugating enzyme family.

It is found in the endoplasmic reticulum membrane. It catalyses the reaction S-ubiquitinyl-[E1 ubiquitin-activating enzyme]-L-cysteine + [E2 ubiquitin-conjugating enzyme]-L-cysteine = [E1 ubiquitin-activating enzyme]-L-cysteine + S-ubiquitinyl-[E2 ubiquitin-conjugating enzyme]-L-cysteine.. Its pathway is protein modification; protein ubiquitination. Its function is as follows. Catalyzes the covalent attachment of ubiquitin to other proteins. Functions in degradation of misfolded or regulated proteins localized in the endoplasmic reticulum (ER) lumen or membrane via the ubiquitin-proteasome system. Cognate E2 conjugating enzyme for the DOA10 ubiquitin ligase complex, which is part of the ERAD-C pathway responsible for the rapid degradation of membrane proteins with misfolded cytoplasmic domains. The polypeptide is Ubiquitin-conjugating enzyme E2 6 (UBC6) (Kluyveromyces lactis (strain ATCC 8585 / CBS 2359 / DSM 70799 / NBRC 1267 / NRRL Y-1140 / WM37) (Yeast)).